Here is a 622-residue protein sequence, read N- to C-terminus: Palmitoyltransferase pfa3 (622 aa).

Over 1-38 (MDATPYTTSSTSTALDSPSSLSATMARRWARKLERYCC) the chain is Cytoplasmic. Residues 39–59 (TCVTYFPLAFVYSMTSWAAYV) form a helical membrane-spanning segment. Residues 60–76 (DVSLSTTPSRVTWLGHS) lie on the Vacuolar side of the membrane. Residues 77–97 (YGFIAVVLYLLANWCYTYAVF) traverse the membrane as a helical segment. Residues 98–175 (TSPGSTTNEY…ATCVGLRNHK (78 aa)) are Cytoplasmic-facing. A DHHC domain is found at 132 to 182 (RFCKKCQARKPDRAHHCSTCRRCVLKMDHHCPWLATCVGLRNHKAFLLFLI). The chain crosses the membrane as a helical span at residues 176–196 (AFLLFLIYTSVFCWVSFAGSA). Residues 197-217 (SWVWEEIMSNTTYVETLMPVN) are Vacuolar-facing. The helical transmembrane segment at 218-238 (YIMLSVISGIIGIVLSAFCGW) threads the bilayer. Topologically, residues 239-622 (HIYLASRGQT…EGRSNDDGVD (384 aa)) are cytoplasmic. Disordered stretches follow at residues 298-334 (PGVT…ELQA), 419-507 (REEQ…YADD), and 533-622 (DDVL…DGVD). Residues 302 to 311 (RPEEGEEMRR) show a composition bias toward basic and acidic residues. Residues 313–330 (TTPSGSSQRNDLASQHNP) show a composition bias toward polar residues. Residues 419–428 (REEQRQRERQ) are compositionally biased toward basic and acidic residues. Polar residues predominate over residues 443 to 455 (YTPTWTPPNQQHP). A compositionally biased stretch (low complexity) spans 466-488 (PSSQPQTQRNSNSSSPSFTPSRR). Positions 533 to 547 (DDVLNDDDDDDEDYF) are enriched in acidic residues. Positions 610–622 (NGEEGRSNDDGVD) are enriched in basic and acidic residues.

Belongs to the DHHC palmitoyltransferase family. PFA3 subfamily. In terms of processing, autopalmitoylated.

It is found in the vacuole membrane. It catalyses the reaction L-cysteinyl-[protein] + hexadecanoyl-CoA = S-hexadecanoyl-L-cysteinyl-[protein] + CoA. In terms of biological role, palmitoyltransferase specific for vac8. Palmitoylates vac8 at one or more of its N-terminal cysteine residues, which is required for its proper membrane localization. The polypeptide is Palmitoyltransferase pfa3 (ptr-3) (Neurospora crassa (strain ATCC 24698 / 74-OR23-1A / CBS 708.71 / DSM 1257 / FGSC 987)).